The sequence spans 102 residues: Large ribosomal subunit protein bL21 (102 aa).

The protein belongs to the bacterial ribosomal protein bL21 family. Part of the 50S ribosomal subunit. Contacts protein L20.

Its function is as follows. This protein binds to 23S rRNA in the presence of protein L20. The chain is Large ribosomal subunit protein bL21 from Cutibacterium acnes (strain DSM 16379 / KPA171202) (Propionibacterium acnes).